Consider the following 251-residue polypeptide: Ubiquinone/menaquinone biosynthesis C-methyltransferase UbiE (251 aa).

S-adenosyl-L-methionine is bound by residues Thr74, Asp95, and 123–124 (NA).

This sequence belongs to the class I-like SAM-binding methyltransferase superfamily. MenG/UbiE family.

It catalyses the reaction a 2-demethylmenaquinol + S-adenosyl-L-methionine = a menaquinol + S-adenosyl-L-homocysteine + H(+). It carries out the reaction a 2-methoxy-6-(all-trans-polyprenyl)benzene-1,4-diol + S-adenosyl-L-methionine = a 5-methoxy-2-methyl-3-(all-trans-polyprenyl)benzene-1,4-diol + S-adenosyl-L-homocysteine + H(+). It participates in quinol/quinone metabolism; menaquinone biosynthesis; menaquinol from 1,4-dihydroxy-2-naphthoate: step 2/2. The protein operates within cofactor biosynthesis; ubiquinone biosynthesis. Methyltransferase required for the conversion of demethylmenaquinol (DMKH2) to menaquinol (MKH2) and the conversion of 2-polyprenyl-6-methoxy-1,4-benzoquinol (DDMQH2) to 2-polyprenyl-3-methyl-6-methoxy-1,4-benzoquinol (DMQH2). This is Ubiquinone/menaquinone biosynthesis C-methyltransferase UbiE from Shewanella frigidimarina (strain NCIMB 400).